The following is a 108-amino-acid chain: MSRAPISRTFTEGRLAQVLVAPIISEKATSIGEKHNQVLFKVLQDATKIEIKAAVELMFKVEVESVQVLNQKGKTKRFGGRTGRRDHLRKAYVSLKAGQELNFSGEAA.

The protein belongs to the universal ribosomal protein uL23 family. As to quaternary structure, part of the 50S ribosomal subunit. Contacts protein L29, and trigger factor when it is bound to the ribosome.

One of the early assembly proteins it binds 23S rRNA. One of the proteins that surrounds the polypeptide exit tunnel on the outside of the ribosome. Forms the main docking site for trigger factor binding to the ribosome. This is Large ribosomal subunit protein uL23 from Leptothrix cholodnii (strain ATCC 51168 / LMG 8142 / SP-6) (Leptothrix discophora (strain SP-6)).